Consider the following 270-residue polypeptide: Acyl-[acyl-carrier-protein]--UDP-N-acetylglucosamine O-acyltransferase (270 aa).

Substrate-binding positions include Gln-69–Lys-72, His-121, His-140, and Gln-157.

This sequence belongs to the transferase hexapeptide repeat family. LpxA subfamily. In terms of assembly, homotrimer.

It is found in the cytoplasm. The catalysed reaction is a (3R)-hydroxyacyl-[ACP] + UDP-N-acetyl-alpha-D-glucosamine = a UDP-3-O-[(3R)-3-hydroxyacyl]-N-acetyl-alpha-D-glucosamine + holo-[ACP]. It participates in glycolipid biosynthesis; lipid IV(A) biosynthesis; lipid IV(A) from (3R)-3-hydroxytetradecanoyl-[acyl-carrier-protein] and UDP-N-acetyl-alpha-D-glucosamine: step 1/6. Functionally, involved in the biosynthesis of lipid A, a phosphorylated glycolipid that anchors the lipopolysaccharide to the outer membrane of the cell. This Helicobacter pylori (strain ATCC 700392 / 26695) (Campylobacter pylori) protein is Acyl-[acyl-carrier-protein]--UDP-N-acetylglucosamine O-acyltransferase.